A 410-amino-acid polypeptide reads, in one-letter code: Beta-arrestin-2 (410 aa).

Residue Y48 is modified to Phosphotyrosine. A hydroxyproline; by PHD2 mark is found at P176 and P181. An interaction with TRAF6 region spans residues 241–410 (ADICLFSTAQ…KDDDCDDQFC (170 aa)). S361 is subject to Phosphoserine. The segment at 364–410 (RETDVPVDTNLIEFDTNYATDDDIVFEDFARLRLKGMKDDDCDDQFC) is interaction with AP2B1. T383 carries the post-translational modification Phosphothreonine. The [DE]-X(1,2)-F-X-X-[FL]-X-X-X-R motif motif lies at 386 to 396 (DIVFEDFARLR).

This sequence belongs to the arrestin family. In terms of assembly, homooligomer; the self-association is mediated by InsP6-binding. Heterooligomer with ARRB1; the association is mediated by InsP6-binding. Interacts with ADRB2 and CHRM2. Interacts with PDE4A. Interacts with PDE4D. Interacts with MAPK10, MAPK1 and MAPK3. Interacts with DRD2. Interacts with FSHR. Interacts with CLTC. Interacts with HTR2C. Interacts with CCR5. Interacts with CXCR4. Interacts with SRC. Interacts with DUSP16; the interaction is interrupted by stimulation of AGTR1 and activation of MAPK10. Interacts with CHUK; the interaction is enhanced stimulation of ADRB2. Interacts with RELA. Interacts with MDM2; the interaction is enhanced by activation of GPCRs. Interacts with SLC9A5. Interacts with TRAF6. Interacts with IGF1R. Interacts with ENG. Interacts with ARRB2. Interacts with KIR2DL1, KIR2DL3 and KIR2DL4. Interacts with LDLR. Interacts with AP2B1. Interacts with C5AR1. Interacts with RAF1. Interacts with MAP2K1. Interacts with MAPK1. Interacts with MAPK10; the interaction enhances MAPK10 activation by MAP3K5. Interacts with MAP2K4; the interaction is enhanced by presence of MAP3K5 and MAPK10. Interacts with MAP3K5. Interacts with AKT1. Interacts with IKBKB and MAP3K14. Interacts with SMO (activated). Interacts with GSK3A and GSK3B. Interacts with CXCR4; the interaction is dependent on C-terminal phosphorylation of CXCR4 and allows activation of MAPK1 and MAPK3. Interacts with GPR143. Interacts with HCK and CXCR1 (phosphorylated). Associates with protein phosphatase 2A (PP2A). Interacts with ACKR3 and ACKR4. Interacts with ARRDC1; the interaction is direct. Interacts with GPR61, GPR62 and GPR135. Interacts (via NACHT and LRR domains) with NLRP3; this interaction is direct and inducible by omega-3 polyunsaturated fatty acids (PUFAs). Interacts with FFAR4 (via C-terminus); this interaction is stimulated by long-chain fatty acids (LCFAs). Interacts with GPR35. Interacts with GPR84. Interacts with TIGIT; this interaction inhibits the NF-kappa-B pathway. Interacts with TGFBR3. Post-translationally, phosphorylated at Thr-383 in the cytoplasm; probably dephosphorylated at the plasma membrane. The phosphorylation does not regulate internalization and recycling of ADRB2, interaction with clathrin or AP2B1. In terms of processing, the ubiquitination status appears to regulate the formation and trafficking of beta-arrestin-GPCR complexes and signaling. Ubiquitination appears to occur GPCR-specific. Ubiquitinated by MDM2; the ubiquitination is required for rapid internalization of ADRB2. Deubiquitinated by USP33; the deubiquitination leads to a dissociation of the beta-arrestin-GPCR complex. Stimulation of a class A GPCR, such as ADRB2, induces transient ubiquitination and subsequently promotes association with USP33. Stimulation of a class B GPCR promotes a sustained ubiquitination. Deubiquitinated by USP20; allowing USP20 to deubiquitinate TRAF6 leading to inhibition of NF-kappa-B signaling. Hydroxylation by PHD2 modulates the rate of internalization by slowing down recruitment to the plasma membrane and inhibiting subsequent co-internalization with class A receptors. In terms of tissue distribution, predominantly localized in neuronal tissues and in the spleen.

It localises to the cytoplasm. The protein localises to the nucleus. Its subcellular location is the cell membrane. It is found in the membrane. The protein resides in the clathrin-coated pit. It localises to the cytoplasmic vesicle. Functions in regulating agonist-mediated G-protein coupled receptor (GPCR) signaling by mediating both receptor desensitization and resensitization processes. During homologous desensitization, beta-arrestins bind to the GPRK-phosphorylated receptor and sterically preclude its coupling to the cognate G-protein; the binding appears to require additional receptor determinants exposed only in the active receptor conformation. The beta-arrestins target many receptors for internalization by acting as endocytic adapters (CLASPs, clathrin-associated sorting proteins) and recruiting the GPRCs to the adapter protein 2 complex 2 (AP-2) in clathrin-coated pits (CCPs). However, the extent of beta-arrestin involvement appears to vary significantly depending on the receptor, agonist and cell type. Internalized arrestin-receptor complexes traffic to intracellular endosomes, where they remain uncoupled from G-proteins. Two different modes of arrestin-mediated internalization occur. Class A receptors, like ADRB2, OPRM1, ENDRA, D1AR and ADRA1B dissociate from beta-arrestin at or near the plasma membrane and undergo rapid recycling. Class B receptors, like AVPR2, AGTR1, NTSR1, TRHR and TACR1 internalize as a complex with arrestin and traffic with it to endosomal vesicles, presumably as desensitized receptors, for extended periods of time. Receptor resensitization then requires that receptor-bound arrestin is removed so that the receptor can be dephosphorylated and returned to the plasma membrane. Mediates endocytosis of CCR7 following ligation of CCL19 but not CCL21. Involved in internalization of P2RY1, P2RY4, P2RY6 and P2RY11 and ATP-stimulated internalization of P2RY2. Involved in phosphorylation-dependent internalization of OPRD1 and subsequent recycling or degradation. Involved in ubiquitination of IGF1R. Beta-arrestins function as multivalent adapter proteins that can switch the GPCR from a G-protein signaling mode that transmits short-lived signals from the plasma membrane via small molecule second messengers and ion channels to a beta-arrestin signaling mode that transmits a distinct set of signals that are initiated as the receptor internalizes and transits the intracellular compartment. Acts as a signaling scaffold for MAPK pathways such as MAPK1/3 (ERK1/2) and MAPK10 (JNK3). ERK1/2 and JNK3 activated by the beta-arrestin scaffold are largely excluded from the nucleus and confined to cytoplasmic locations such as endocytic vesicles, also called beta-arrestin signalosomes. Acts as a signaling scaffold for the AKT1 pathway. GPCRs for which the beta-arrestin-mediated signaling relies on both ARRB1 and ARRB2 (codependent regulation) include ADRB2, F2RL1 and PTH1R. For some GPCRs the beta-arrestin-mediated signaling relies on either ARRB1 or ARRB2 and is inhibited by the other respective beta-arrestin form (reciprocal regulation). Increases ERK1/2 signaling in AGTR1- and AVPR2-mediated activation (reciprocal regulation). Involved in CCR7-mediated ERK1/2 signaling involving ligand CCL19. Is involved in type-1A angiotensin II receptor/AGTR1-mediated ERK activity. Is involved in type-1A angiotensin II receptor/AGTR1-mediated MAPK10 activity. Is involved in dopamine-stimulated AKT1 activity in the striatum by disrupting the association of AKT1 with its negative regulator PP2A. Involved in AGTR1-mediated chemotaxis. Appears to function as signaling scaffold involved in regulation of MIP-1-beta-stimulated CCR5-dependent chemotaxis. Involved in attenuation of NF-kappa-B-dependent transcription in response to GPCR or cytokine stimulation by interacting with and stabilizing CHUK. Suppresses UV-induced NF-kappa-B-dependent activation by interacting with CHUK. The function is promoted by stimulation of ADRB2 and dephosphorylation of ARRB2. Involved in IL8-mediated granule release in neutrophils. Involved in p53/TP53-mediated apoptosis by regulating MDM2 and reducing the MDM2-mediated degradation of p53/TP53. May serve as nuclear messenger for GPCRs. Upon stimulation of OR1D2, may be involved in regulation of gene expression during the early processes of fertilization. Also involved in regulation of receptors other than GPCRs. Involved in endocytosis of TGFBR2 and TGFBR3 and down-regulates TGF-beta signaling such as NF-kappa-B activation. Involved in endocytosis of low-density lipoprotein receptor/LDLR. Involved in endocytosis of smoothened homolog/Smo, which also requires GRK2. Involved in endocytosis of SLC9A5. Involved in endocytosis of ENG and subsequent TGF-beta-mediated ERK activation and migration of epithelial cells. Involved in Toll-like receptor and IL-1 receptor signaling through the interaction with TRAF6 which prevents TRAF6 autoubiquitination and oligomerization required for activation of NF-kappa-B and JUN. Involved in insulin resistance by acting as insulin-induced signaling scaffold for SRC, AKT1 and INSR. Involved in regulation of inhibitory signaling of natural killer cells by recruiting PTPN6 and PTPN11 to KIR2DL1. Involved in the internalization of the atypical chemokine receptor ACKR3. Acts as an adapter protein coupling FFAR4 receptor to specific downstream signaling pathways, as well as mediating receptor endocytosis. During the activation step of NLRP3 inflammasome, directly associates with NLRP3 leading to inhibition of pro-inflammatory cytokine release and inhibition of inflammation. The chain is Beta-arrestin-2 (Arrb2) from Mus musculus (Mouse).